The chain runs to 288 residues: ATP synthase gamma chain (288 aa).

It belongs to the ATPase gamma chain family. F-type ATPases have 2 components, CF(1) - the catalytic core - and CF(0) - the membrane proton channel. CF(1) has five subunits: alpha(3), beta(3), gamma(1), delta(1), epsilon(1). CF(0) has three main subunits: a, b and c.

It is found in the cell membrane. Its function is as follows. Produces ATP from ADP in the presence of a proton gradient across the membrane. The gamma chain is believed to be important in regulating ATPase activity and the flow of protons through the CF(0) complex. The chain is ATP synthase gamma chain from Shouchella clausii (strain KSM-K16) (Alkalihalobacillus clausii).